The chain runs to 117 residues: Phosphoribosyl-ATP pyrophosphatase (117 aa).

Belongs to the PRA-PH family.

The protein resides in the cytoplasm. It catalyses the reaction 1-(5-phospho-beta-D-ribosyl)-ATP + H2O = 1-(5-phospho-beta-D-ribosyl)-5'-AMP + diphosphate + H(+). It functions in the pathway amino-acid biosynthesis; L-histidine biosynthesis; L-histidine from 5-phospho-alpha-D-ribose 1-diphosphate: step 2/9. In Rhodospirillum rubrum (strain ATCC 11170 / ATH 1.1.1 / DSM 467 / LMG 4362 / NCIMB 8255 / S1), this protein is Phosphoribosyl-ATP pyrophosphatase.